The chain runs to 569 residues: Urease subunit alpha (569 aa).

A Urease domain is found at 132–569; the sequence is GGIDSHIHFI…LPLAQRYFLF (438 aa). Ni(2+) contacts are provided by histidine 137, histidine 139, and lysine 220. Lysine 220 bears the N6-carboxylysine mark. Histidine 222 contacts substrate. Ni(2+) is bound by residues histidine 249 and histidine 275. Catalysis depends on histidine 323, which acts as the Proton donor. Aspartate 363 is a Ni(2+) binding site.

It belongs to the metallo-dependent hydrolases superfamily. Urease alpha subunit family. In terms of assembly, heterotrimer of UreA (gamma), UreB (beta) and UreC (alpha) subunits. Three heterotrimers associate to form the active enzyme. It depends on Ni cation as a cofactor. Carboxylation allows a single lysine to coordinate two nickel ions.

The protein localises to the cytoplasm. It catalyses the reaction urea + 2 H2O + H(+) = hydrogencarbonate + 2 NH4(+). The protein operates within nitrogen metabolism; urea degradation; CO(2) and NH(3) from urea (urease route): step 1/1. In Dechloromonas aromatica (strain RCB), this protein is Urease subunit alpha.